The primary structure comprises 185 residues: GYLGAPAVVAPGAPLAARAYAAPAYAAPLARYAAPVARAYAAPVARAYAPAVAAAPAAVEYDPHPQYSFAYNVQDAHTGDSKTQHESRDGDVVQGSYSLAEPDGSIRVVDYTADPVNGFNAVVHKEAGAHPAAAPVAVAAPVAHAPVAVAAPVRAYAAPLARAAYAAPIARASYGPALAYGGAYH.

7 tandem repeats follow at residues 21–24, 33–36, 41–44, 54–57, 133–136, 139–142, and 150–153. The 71-residue stretch at 64 to 134 folds into the Chitin-binding type R&amp;R domain; that stretch reads HPQYSFAYNV…KEAGAHPAAA (71 aa).

Its function is as follows. Component of the cuticle of migratory locust which contains more than 100 different structural proteins. This Locusta migratoria (Migratory locust) protein is Cuticle protein 18.6, isoform A.